A 908-amino-acid chain; its full sequence is Isoleucine--tRNA ligase (908 aa).

Positions 59–69 match the 'HIGH' region motif; sequence PYANGDLHIGH. Glu-554 is a binding site for L-isoleucyl-5'-AMP. Residues 595-599 carry the 'KMSKS' region motif; that stretch reads KMSKS. Residue Lys-598 coordinates ATP. 4 residues coordinate Zn(2+): Cys-882, Cys-885, Cys-898, and Cys-901.

The protein belongs to the class-I aminoacyl-tRNA synthetase family. IleS type 1 subfamily. Monomer. Zn(2+) serves as cofactor.

The protein localises to the cytoplasm. It carries out the reaction tRNA(Ile) + L-isoleucine + ATP = L-isoleucyl-tRNA(Ile) + AMP + diphosphate. Catalyzes the attachment of isoleucine to tRNA(Ile). As IleRS can inadvertently accommodate and process structurally similar amino acids such as valine, to avoid such errors it has two additional distinct tRNA(Ile)-dependent editing activities. One activity is designated as 'pretransfer' editing and involves the hydrolysis of activated Val-AMP. The other activity is designated 'posttransfer' editing and involves deacylation of mischarged Val-tRNA(Ile). This chain is Isoleucine--tRNA ligase, found in Mesoplasma florum (strain ATCC 33453 / NBRC 100688 / NCTC 11704 / L1) (Acholeplasma florum).